The chain runs to 508 residues: Amphoterin-induced protein 3 (508 aa).

An N-terminal signal peptide occupies residues 1 to 19 (MAWLVLLGLLLCMLGAGSG). Residues 20–383 (TSDLEGVLPP…PRPEPEAFNT (364 aa)) lie on the Extracellular side of the membrane. The region spanning 25-61 (GVLPPDPHNCPNKCVCAADVLSCAGRGLQDLPAALPA) is the LRRNT domain. 2 cysteine pairs are disulfide-bonded: Cys34-Cys40 and Cys38-Cys47. LRR repeat units follow at residues 62–83 (TAAELDLSHNALKRLHPGWLAP), 86–107 (RLRALYLGYNKLDVLGRGVFTN), 110–131 (GLRILDLSSNLLRRLRTYDLDG), 134–155 (ELEKLLLFNNRLMHLDLDAFQG), 158–178 (MLSHLYLSCNELSSFSFNHLH), and 184–207 (RLRTLDLSSNWLGHVSVPELAALP). N-linked (GlcNAc...) asparagine glycosylation occurs at Asn107. The region spanning 219 to 275 (NPLPCDCSLYHLLRRWHQRGLSALHDFEREYTCLAFKVAESRVRFFEHSRVFKNCSV) is the LRRCT domain. 3 disulfides stabilise this stretch: Cys223–Cys251, Cys225–Cys273, and Cys300–Cys352. N-linked (GlcNAc...) asparagine glycosylation is found at Asn272, Asn301, Asn362, and Asn368. An Ig-like C2-type domain is found at 279-370 (PGLELPEEEL…HNQTLEYNVS (92 aa)). Residues 384–404 (GFTTLLGCIVGLVLVLLYLFA) traverse the membrane as a helical segment. Topologically, residues 405–508 (PPCRGCCRCC…STGSEGLMMS (104 aa)) are cytoplasmic.

The protein belongs to the immunoglobulin superfamily. AMIGO family. As to quaternary structure, binds AMIGO1 or AMIGO2.

It localises to the membrane. May mediate heterophilic cell-cell interaction. May contribute to signal transduction through its intracellular domain. In Rattus norvegicus (Rat), this protein is Amphoterin-induced protein 3.